Reading from the N-terminus, the 140-residue chain is Class I hydrophobin C (140 aa).

Positions 1 to 23 are cleaved as a signal peptide; that stretch reads MKFFVPAFLFAATAMALPGSGSA. Intrachain disulfides connect C41–C114, C49–C108, C50–C85, and C115–C133.

The protein belongs to the fungal hydrophobin family.

It is found in the secreted. The protein localises to the cell wall. In terms of biological role, aerial growth, conidiation, and dispersal of filamentous fungi in the environment rely upon a capability of their secreting small amphipathic proteins called hydrophobins (HPBs) with low sequence identity. Class I can self-assemble into an outermost layer of rodlet bundles on aerial cell surfaces, conferring cellular hydrophobicity that supports fungal growth, development and dispersal; whereas Class II form highly ordered films at water-air interfaces through intermolecular interactions but contribute nothing to the rodlet structure. In P.expansum, hydrophobins contribute to germination, tolerance to cold stress and mycotoxins patulin and citrinin production. HfbC is involved in the virulence on apple. This is Class I hydrophobin C from Penicillium expansum (Blue mold rot fungus).